Consider the following 487-residue polypeptide: Histamine H1 receptor (487 aa).

Topologically, residues 1–29 (MSLPNSSCLLEDKMCEGNKTTMASPQLMP) are extracellular. N-linked (GlcNAc...) asparagine glycosylation is found at Asn-5 and Asn-18. A helical membrane pass occupies residues 30–50 (LVVVLSTICLVTVGLNLLVLY). Residues 51-64 (AVRSERKLHTVGNL) lie on the Cytoplasmic side of the membrane. The helical transmembrane segment at 65-89 (YIVSLSVADLIVGAVVMPMNILYLL) threads the bilayer. Residues 90-97 (MSKWSLGR) lie on the Extracellular side of the membrane. The helical transmembrane segment at 98–123 (PLCLFWLSMDYVASTASIFSVFILCI) threads the bilayer. Cys-100 and Cys-180 form a disulfide bridge. Histamine is bound by residues Asp-107 and Thr-112. Residues 107 to 112 (DYVAST) form an important for agonist binding region. At 124 to 144 (DRYRSVQQPLRYLKYRTKTRA) the chain is on the cytoplasmic side. 2 positions are modified to phosphothreonine: Thr-140 and Thr-142. A helical transmembrane segment spans residues 145–164 (SATILGAWFLSFLWVIPILG). Topologically, residues 165–188 (WNHFMQQTSVRREDKCETDFYDVT) are extracellular. A helical transmembrane segment spans residues 189–211 (WFKVMTAIINFYLPTLLMLWFYA). Asn-198 is a histamine binding site. Residues 212-416 (KIYKAVRQHC…MNRERKAAKQ (205 aa)) are Cytoplasmic-facing. Ser-230 bears the Phosphoserine mark. Residues 238–261 (KLRPENPKGDAKKPGKESPWEVLK) are compositionally biased toward basic and acidic residues. A disordered region spans residues 238–292 (KLRPENPKGDAKKPGKESPWEVLKRKPKDAGGGSVLKSPSQTXKEMKSPVVFSQE). Thr-279 is subject to Phosphothreonine. Ser-344 and Ser-347 each carry phosphoserine. The segment at 345–379 (EISEDQMLGDSQSFSRTDSDTTTETAPGKGKLRSG) is disordered. The span at 353-369 (GDSQSFSRTDSDTTTET) shows a compositional bias: polar residues. Phosphoserine occurs at positions 380, 396, and 398. The chain crosses the membrane as a helical span at residues 417–440 (LGFIMAAFILCWIPYFIFFMVIAF). The tract at residues 424-428 (FILCW) is important for agonist binding. Tyr-431 contacts histamine. An intrachain disulfide couples Cys-441 to Cys-444. The Extracellular segment spans residues 441-446 (CKNCCN). Residues 447 to 469 (EHLHMFTIWLGYINSTLNPLIYP) traverse the membrane as a helical segment. Residues 470-487 (LCNENFKKTFKRILHIRS) lie on the Cytoplasmic side of the membrane.

The protein belongs to the G-protein coupled receptor 1 family. Phosphorylation at sites in the second and third cytoplasmic loops independently contribute to agonist-induced receptor down-regulation.

The protein localises to the cell membrane. Functionally, G-protein-coupled receptor for histamine, a biogenic amine that functions as an immune modulator and a neurotransmitter. Through the H1 receptor, histamine mediates the contraction of smooth muscles and increases capillary permeability due to contraction of terminal venules. Also mediates neurotransmission in the central nervous system and thereby regulates circadian rhythms, emotional and locomotor activities as well as cognitive functions. This is Histamine H1 receptor from Pan troglodytes (Chimpanzee).